Here is a 574-residue protein sequence, read N- to C-terminus: Efflux pump FUB11 (574 aa).

The segment at 1–44 (MAIDPQPSSPSLSSETIANDTIGNDNNVNEPSVEPKTQEHQHTV) is disordered. Residues 9-30 (SPSLSSETIANDTIGNDNNVNE) show a composition bias toward polar residues. A glycan (N-linked (GlcNAc...) asparagine) is linked at N19. 11 consecutive transmembrane segments (helical) span residues 116 to 136 (VATL…LIWA), 148 to 168 (FFFT…AGSI), 176 to 196 (FLTG…IADM), 208 to 228 (MFSG…GFLG), 235 to 255 (WLHG…TVFI), 318 to 338 (IYIS…PIVF), 348 to 368 (IGGL…ISFA), 394 to 414 (AIMG…TTFA), 419 to 439 (IVPI…FMAL), 449 to 469 (IFAA…GAAF), and 484 to 504 (WASS…FLFY). The disordered stretch occupies residues 552–574 (HNSHTSATHSHGHRRSLSCTRSV).

The protein belongs to the major facilitator superfamily. DHA1 family. Polyamines/proton antiporter (TC 2.A.1.2.16) subfamily.

It is found in the cell membrane. Functionally, efflux pump involved in export of fusaric acid, a mycotoxin with low to moderate toxicity to animals and humans, but with high phytotoxic properties. Constitutes a self-protecting mechanism of the fungus against critical levels of fusaric acid within the cell. The sequence is that of Efflux pump FUB11 from Gibberella fujikuroi (strain CBS 195.34 / IMI 58289 / NRRL A-6831) (Bakanae and foot rot disease fungus).